We begin with the raw amino-acid sequence, 1170 residues long: PAN2-PAN3 deadenylation complex catalytic subunit PAN2 (1170 aa).

WD repeat units lie at residues 104–144 (ENMK…IIKQ) and 280–319 (NISS…HFTD). The interval 319–458 (DMAIPIELPE…DPNEIESLKP (140 aa)) is linker. The segment at 399 to 459 (RRNQVEDTRN…PNEIESLKPE (61 aa)) is disordered. A compositionally biased stretch (acidic residues) spans 443–452 (VDQEPEDPNE). A USP domain is found at 459-846 (EAPPLYRNLE…MPAVLLFQIK (388 aa)). In terms of domain architecture, Exonuclease spans 894–1067 (VALDTEFVSL…EDARTALKLY (174 aa)). Residues Asp-897, Glu-899, Asp-1006, and Asp-1059 each coordinate a divalent metal cation. Residues 1094-1170 (NFKPPRREDR…PSKASSPLPK (77 aa)) form a disordered region. Residues 1098 to 1108 (PRREDREKELQ) show a composition bias toward basic and acidic residues. The span at 1109 to 1119 (RQSTPPNSTAP) shows a compositional bias: polar residues.

Belongs to the peptidase C19 family. PAN2 subfamily. As to quaternary structure, forms a heterotrimer with an asymmetric homodimer of the regulatory subunit PAN3 to form the poly(A)-nuclease (PAN) deadenylation complex. A divalent metal cation serves as cofactor.

It is found in the cytoplasm. It carries out the reaction Exonucleolytic cleavage of poly(A) to 5'-AMP.. Its activity is regulated as follows. Positively regulated by the regulatory subunit PAN3. Its function is as follows. Catalytic subunit of the poly(A)-nuclease (PAN) deadenylation complex, one of two cytoplasmic mRNA deadenylases involved in mRNA turnover. PAN specifically shortens poly(A) tails of RNA and the activity is stimulated by poly(A)-binding protein PAB1. PAN deadenylation is followed by rapid degradation of the shortened mRNA tails by the CCR4-NOT complex. Deadenylated mRNAs are then degraded by two alternative mechanisms, namely exosome-mediated 3'-5' exonucleolytic degradation, or deadenylation-dependent mRNA decaping and subsequent 5'-3' exonucleolytic degradation by XRN1. May also be involved in post-transcriptional maturation of mRNA poly(A) tails. The sequence is that of PAN2-PAN3 deadenylation complex catalytic subunit PAN2 from Chaetomium thermophilum (strain DSM 1495 / CBS 144.50 / IMI 039719) (Thermochaetoides thermophila).